A 459-amino-acid polypeptide reads, in one-letter code: ATP synthase subunit beta (459 aa).

148–155 (GGAGVGKT) serves as a coordination point for ATP.

This sequence belongs to the ATPase alpha/beta chains family. As to quaternary structure, F-type ATPases have 2 components, CF(1) - the catalytic core - and CF(0) - the membrane proton channel. CF(1) has five subunits: alpha(3), beta(3), gamma(1), delta(1), epsilon(1). CF(0) has three main subunits: a(1), b(2) and c(9-12). The alpha and beta chains form an alternating ring which encloses part of the gamma chain. CF(1) is attached to CF(0) by a central stalk formed by the gamma and epsilon chains, while a peripheral stalk is formed by the delta and b chains.

It is found in the cell inner membrane. It carries out the reaction ATP + H2O + 4 H(+)(in) = ADP + phosphate + 5 H(+)(out). Functionally, produces ATP from ADP in the presence of a proton gradient across the membrane. The catalytic sites are hosted primarily by the beta subunits. This is ATP synthase subunit beta from Cellvibrio japonicus (strain Ueda107) (Pseudomonas fluorescens subsp. cellulosa).